Here is a 333-residue protein sequence, read N- to C-terminus: Protein-methionine-sulfoxide reductase catalytic subunit MsrP (333 aa).

The segment at residues 1-43 (MSKQRKLTEADVTPESVFYQRRKVLQALGITAASLALPHNAQA) is a signal peptide (tat-type signal). Mo-molybdopterin contacts are provided by residues N87, 90–91 (YE), C145, T180, N232, R237, and 248–250 (GIK).

The protein belongs to the MsrP family. Heterodimer of a catalytic subunit (MsrP) and a heme-binding subunit (MsrQ). Mo-molybdopterin is required as a cofactor. Predicted to be exported by the Tat system. The position of the signal peptide cleavage has not been experimentally proven.

It localises to the periplasm. The enzyme catalyses L-methionyl-[protein] + a quinone + H2O = L-methionyl-(S)-S-oxide-[protein] + a quinol. It carries out the reaction L-methionyl-[protein] + a quinone + H2O = L-methionyl-(R)-S-oxide-[protein] + a quinol. Functionally, part of the MsrPQ system that repairs oxidized periplasmic proteins containing methionine sulfoxide residues (Met-O), using respiratory chain electrons. Thus protects these proteins from oxidative-stress damage caused by reactive species of oxygen and chlorine generated by the host defense mechanisms. MsrPQ is essential for the maintenance of envelope integrity under bleach stress, rescuing a wide series of structurally unrelated periplasmic proteins from methionine oxidation. The catalytic subunit MsrP is non-stereospecific, being able to reduce both (R-) and (S-) diastereoisomers of methionine sulfoxide. This is Protein-methionine-sulfoxide reductase catalytic subunit MsrP from Serratia proteamaculans (strain 568).